The primary structure comprises 136 residues: Large ribosomal subunit protein uL16 (136 aa).

The protein belongs to the universal ribosomal protein uL16 family. As to quaternary structure, part of the 50S ribosomal subunit.

Its function is as follows. Binds 23S rRNA and is also seen to make contacts with the A and possibly P site tRNAs. This Histophilus somni (strain 129Pt) (Haemophilus somnus) protein is Large ribosomal subunit protein uL16.